A 693-amino-acid chain; its full sequence is MTGMQHGLFSPPAPAGLAEKVEALRATIRRYDYEYYVLNAPSVPDSEYDRVFRELKALEDAHPELVTPDSPTQRVGGAAMAELMPVRHHVPMLSIETETDTTPQGAYNFDARVRKKLGLLPEDGPIEYAAELKFDGLAMSLRYEHGLLVQAATRGDGEVGEDVTHNIRTMRQIPLQLHGEAPEVLEVRGEVYMSRPDFERYNARQREHGKPTLVNPRNGAAGSIRQLDPRLAAQRPLSFFAYGLGETKGWQVPLTHAQVLDALKALGLPVCNERAVGMGAEALAAFHQAISAKRDQLPYDIDGVVYKVNRLDLQRELGFRSREPNWAVAHKFPAQEEMTVLEHIDVQVGRTGAITPVARLKPVFVGGVTVTNATLHNQDEIDRKDVRIGDTVVVRRAGDVIPEVVSVIKERRPAGSQPYILLDAIGGLCPVCGSHAVRLPEEAAVRCTGGLFCAAQRKQAILHFASRRAMDIEGLGEKLVDQLVDQNMVETLADLYDPGKINLETLSGLDRMAMKSAQNLLDALQKSKQATLNRFIYALGIRNVGEATAKDLARHFGRLDALQAADVDTLQQVPDVGPVVARSIAEFFAEEHNREVIRKLRDAGIHWSETDGQPASSSKLEGKTFVLTGTLPTMSRDEAKEKIEAAGGKVSGSVSKKTSYVVAGSDAGSKLAKAQELGLAILDEEGLLSLLAE.

NAD(+)-binding positions include 45–49 (DSEYD), 94–95 (SI), and E131. K133 serves as the catalytic N6-AMP-lysine intermediate. 4 residues coordinate NAD(+): R154, E190, K307, and K331. Zn(2+) contacts are provided by C429, C432, C447, and C453. Positions 615–693 (ASSSKLEGKT…EEGLLSLLAE (79 aa)) constitute a BRCT domain.

The protein belongs to the NAD-dependent DNA ligase family. LigA subfamily. It depends on Mg(2+) as a cofactor. Mn(2+) is required as a cofactor.

The enzyme catalyses NAD(+) + (deoxyribonucleotide)n-3'-hydroxyl + 5'-phospho-(deoxyribonucleotide)m = (deoxyribonucleotide)n+m + AMP + beta-nicotinamide D-nucleotide.. In terms of biological role, DNA ligase that catalyzes the formation of phosphodiester linkages between 5'-phosphoryl and 3'-hydroxyl groups in double-stranded DNA using NAD as a coenzyme and as the energy source for the reaction. It is essential for DNA replication and repair of damaged DNA. This Methylobacillus flagellatus (strain ATCC 51484 / DSM 6875 / VKM B-1610 / KT) protein is DNA ligase.